Here is an 855-residue protein sequence, read N- to C-terminus: Inactive rhomboid protein 1 (855 aa).

The tract at residues Met1–Ser36 is disordered. Residues Met1 to Thr411 lie on the Cytoplasmic side of the membrane. A phosphoserine mark is found at Ser76 and Ser176. Thr180 and Thr183 each carry phosphothreonine. Residue Ser390 is modified to Phosphoserine. A helical membrane pass occupies residues Phe412–Phe432. Residues Ser433 to Arg655 lie on the Lumenal side of the membrane. N-linked (GlcNAc...) asparagine glycosylation occurs at Asn583. Residues Leu656–Gln676 form a helical membrane-spanning segment. Topologically, residues Met677–Arg691 are cytoplasmic. The helical transmembrane segment at Ile692–Pro712 threads the bilayer. The Lumenal portion of the chain corresponds to Tyr713–Arg714. A helical membrane pass occupies residues Ala715 to Phe735. Residues Gln736–Arg746 lie on the Cytoplasmic side of the membrane. Residues Ala747–Ile767 form a helical membrane-spanning segment. The Lumenal segment spans residues Asp768–His772. The helical transmembrane segment at Ile773–Gly793 threads the bilayer. Residues Lys794–Gln803 lie on the Cytoplasmic side of the membrane. A helical membrane pass occupies residues Ile804–Phe824. Residues Tyr825–His855 are Lumenal-facing.

The protein belongs to the peptidase S54 family. As to quaternary structure, homodimer, or homooligomer. Interacts with TGFA and HBEGF. Interacts with EGF; may retain EGF in the endoplasmic reticulum and regulates its degradation through the endoplasmic reticulum-associated degradation (ERAD). Interacts (via cytoplasmic N-terminus) with FRMD8/iTAP; this interaction leads to mutual protein stabilization. Interacts with ADAM17/TACE.

It localises to the endoplasmic reticulum membrane. Its subcellular location is the golgi apparatus membrane. Its function is as follows. Regulates ADAM17 protease, a sheddase of the epidermal growth factor (EGF) receptor ligands and TNF, thereby plays a role in sleep, cell survival, proliferation, migration and inflammation. Does not exhibit any protease activity on its own. This chain is Inactive rhomboid protein 1 (RHBDF1), found in Papio anubis (Olive baboon).